A 1616-amino-acid polypeptide reads, in one-letter code: S-layer-related protein (1616 aa).

The first 30 residues, 1–30 (MKSLLRKWNGMMIIALVISLLTPAWGKASA), serve as a signal peptide directing secretion. Residues 1115-1185 (VKALKLDRGT…GSGTVQATYE (71 aa)) enclose the BIG2 domain. Disordered stretches follow at residues 1191 to 1244 (ARVS…DGRN), 1372 to 1455 (NKRN…GRAR), 1523 to 1554 (ARGR…REAG), and 1585 to 1616 (FAGG…ARPC). Residues 1199 to 1225 (STGGGSDTGSGTGSGSGGGSAGGGGTA) are compositionally biased toward gly residues. Residues 1372–1387 (NKRNRRLRKLRPKNRK) are compositionally biased toward basic residues. A compositionally biased stretch (low complexity) spans 1406-1416 (PPECSASCPPA). The SLH domain maps to 1438–1502 (WSPPRSASPT…ALDPAPAAAD (65 aa)). The segment covering 1536–1554 (RGADTRTDERDAHARREAG) has biased composition (basic and acidic residues). A compositionally biased stretch (basic residues) spans 1594-1616 (GRTRGRTLRARPARLPVRKARPC).

The protein localises to the secreted. The protein resides in the cell wall. Its subcellular location is the S-layer. Functionally, the S-layer is a paracrystalline mono-layered assembly of proteins which coats the surface of bacteria. May play a role in the export of butirosin from the organism. The sequence is that of S-layer-related protein (butB) from Niallia circulans (Bacillus circulans).